Here is a 293-residue protein sequence, read N- to C-terminus: Extracellular metalloprotease MGYG_00389 (293 aa).

The signal sequence occupies residues 1–19 (MRFSVFLPAIAALSSAVAA). 2 N-linked (GlcNAc...) asparagine glycosylation sites follow: Asn-49 and Asn-53. A Zn(2+)-binding site is contributed by His-184. Glu-185 is a catalytic residue. His-188 contributes to the Zn(2+) binding site. Cysteines 223 and 249 form a disulfide. Residues 270-293 (GSGSGSVTRPRPKPPVLMDYEHRL) are disordered.

Belongs to the peptidase M43B family.

The protein localises to the secreted. Secreted metalloproteinase that allows assimilation of proteinaceous substrates. Plays a pivotal role as a pathogenicity determinant during infections and contributes to the ability of the pathogen to persist within the mammalian host. This is Extracellular metalloprotease MGYG_00389 from Arthroderma gypseum (strain ATCC MYA-4604 / CBS 118893) (Microsporum gypseum).